The sequence spans 492 residues: Catalase (492 aa).

Residues His-65 and Asn-138 contribute to the active site. Tyr-348 lines the heme pocket.

This sequence belongs to the catalase family. In terms of assembly, homotetramer. Heme serves as cofactor.

The protein resides in the cytoplasm. It is found in the cytosol. It localises to the peroxisome matrix. It carries out the reaction 2 H2O2 = O2 + 2 H2O. In terms of biological role, catalyzes the degradation of hydrogen peroxide (H(2)O(2)) generated by peroxisomal oxidases to water and oxygen, thereby protecting cells from the toxic effects of hydrogen peroxide. The polypeptide is Catalase (Ipomoea batatas (Sweet potato)).